The sequence spans 1528 residues: MSVAIRKRSWEEHVTHWMGQPFNSDDRNTACHHGLVADSLQASMEKDATLNVDRKEKCVSLPDCCHGSELRDFPGRPMGHLSKDVDENDSHEGEDQFLSLEASTETLVHVSDEDNNADLCLTDDKQVLNTQGQKTSGQHMIQGAGSLEKALPIIQSNQVSSNSWGIAGETELALVKESGERKVTDSISKSLELCNEISLSEIKDAPKVNAVDTLNVKDIAPEKQLLNSAVIAQQRRKPDPPKDENERSTCNVVQNEFLDTPCTNRGLPLLKTDFGSCLLQPPSCPNGMSAENGLEKSGFSQHQNKSPPKVKAEDGMQCLQLKETLATQEPTDNQVRLRKRKEIREDRDRARLDSMVLLIMKLDQLDQDIENALSTSSSPSGTPTNLRRHVPDLESGSESGADTISVNQTRVNLSSDTESTDLPSSTPVANSGTKPKTTAIQGISEKEKAEIEAKEACDWLRATGFPQYAQLYEDFLFPIDISLVKREHDFLDRDAIEALCRRLNTLNKCAVMKLEISPHRKRSDDSDEDEPCAISGKWTFQRDSKRWSRLEEFDVFSPKQDLVPGSPDDSHPKDGPSPGGTLMDLSERQEVSSVRSLSSTGSLPSHAPPSEDAATPRTNSVISVCSSSNLAGNDDSFGSLPSPKELSSFSFSMKGHEKTAKSKTRSLLKRMESLKLKSSHHSKHKAPSKLGLIISGPILQEGMDEEKLKQLNCVEISALNGNRINVPMVRKRSVSNSTQTSSSSSQSETSSAVSTPSPVTRTRSLSACNKRVGMYLEGFDPFNQSTFNNVVEQNFKNRESYPEDTVFYIPEDHKPGTFPKALTNGSFSPSGNNGSVNWRTGSFHGPGHISLRRENSSDSPKELKRRNSSSSMSSRLSIYDNVPGSILYSSSGDLADLENEDIFPELDDILYHVKGMQRIVNQWSEKFSDEGDSDSALDSVSPCPSSPKQIHLDVDNDRTTPSDLDSTGNSLNEPEEPSEIPERRDSGVGASLTRSNRHRLRWHSFQSSHRPSLNSVSLQINCQSVAQMNLLQKYSLLKLTALLEKYTPSNKHGFSWAVPKFMKRIKVPDYKDRSVFGVPLTVNVQRTGQPLPQSIQQAMRYLRNHCLDQVGLFRKSGVKSRIQALRQMNEGAIDCVNYEGQSAYDVADMLKQYFRDLPEPLMTNKLSETFLQIYQYVPKDQRLQAIKAAIMLLPDENREVLQTLLYFLSDVTAAVKENQMTPTNLAVCLAPSLFHLNTLKRENSSPRVMQRKQSLGKPDQKDLNENLAATQGLAHMIAECKKLFQVPEEMSRCRNSYTEQELKPLTLEALGHLGNDDSADYQHFLQDCVDGLFKEVKEKFKGWVSYSTSEQAELSYKKVSEGPPLRLWRSVIEVPAVPEEILKRLLKEQHLWDVDLLDSKVIEILDSQTEIYQYVQNSMAPHPARDYVVLRTWRTNLPKGACALLLTSVDHDRAPVVGVRVNVLLSRYLIEPCGPGKSKLTYMCRVDLRGHMPEWYTKSFGHLCAAEVVKIRDSFSNQNTETKDTKSR.

Disordered regions lie at residues Asp72 to Glu94, Met288 to Val310, and Ala372 to Lys436. Residues Leu81–Glu94 are compositionally biased toward basic and acidic residues. Over residues Ser374–Thr384 the composition is skewed to low complexity. Positions Gly396–Lys436 are enriched in polar residues. The SAM domain maps to Lys448–Glu515. A phosphoserine mark is found at Ser523, Ser526, and Ser566. Disordered stretches follow at residues Pro558–Arg617, Arg732–Ser764, Pro829–Leu876, and Ser928–Ala990. Composition is skewed to low complexity over residues Val591–Ser605 and Val734–Thr760. Positions Gln710 to Gly884 are focal adhesion-targeting (FAT). Ser757 is subject to Phosphoserine. Basic and acidic residues predominate over residues Leu851–Glu862. Over residues Ala936–Lys948 the composition is skewed to polar residues. The segment covering Ile950–Thr960 has biased composition (basic and acidic residues). Over residues Pro961–Asn972 the composition is skewed to polar residues. The interval Lys1051–Arg1073 is polybasic cluster (PBR). The region spanning Val1078–Phe1284 is the Rho-GAP domain. Residues Gly1314–Glu1521 enclose the START domain.

As to quaternary structure, interacts with EF1A1, facilitates EF1A1 distribution to the membrane periphery and ruffles upon growth factor stimulation and suppresses cell migration. Interacts with tensin TNS1 (via N-terminus); the interaction is decreased by phosphorylation of TNS1. Interacts with TNS3 and PTEN; in resting cells, interacts with TNS3 (via C2 tensin-type domain) but, following growth factor stimulation, TNS3 and PTEN are phosphorylated which leads to weakened interaction with TNS3 and enhanced interaction with PTEN. Interacts (via C-terminus) with tensin TNS4 (via SH2 domain); the interaction is independent of tyrosine phosphorylation of DLC1. In terms of tissue distribution, highest level of expression in the spleen, with rather lower levels in prostate, testis, ovary, small intestine and colon, but none in the thymus.

The protein resides in the cytoplasm. It is found in the cell junction. Its subcellular location is the focal adhesion. It localises to the membrane. Functionally, functions as a GTPase-activating protein for the small GTPases RHOA, RHOB, RHOC and CDC42, terminating their downstream signaling. This induces morphological changes and detachment through cytoskeletal reorganization, playing a critical role in biological processes such as cell migration and proliferation. Also functions in vivo as an activator of the phospholipase PLCD1. Active DLC1 increases cell migration velocity but reduces directionality. Required for growth factor-induced epithelial cell migration; in resting cells, interacts with TNS3 while PTEN interacts with the p85 regulatory subunit of the PI3K kinase complex but growth factor stimulation induces phosphorylation of TNS3 and PTEN, causing them to change their binding preference so that PTEN interacts with DLC1 and TNS3 interacts with p85. The PTEN-DLC1 complex translocates to the posterior of migrating cells to activate RHOA while the TNS3-p85 complex translocates to the leading edge of migrating cells to promote RAC1 activation. The polypeptide is Rho GTPase-activating protein 7 (DLC1) (Homo sapiens (Human)).